The chain runs to 212 residues: Pyridoxine/pyridoxamine 5'-phosphate oxidase (212 aa).

Residues 8–11 (RREY) and Lys-66 contribute to the substrate site. FMN-binding positions include 61–66 (RIVLLK), 76–77 (FT), Arg-82, Lys-83, and Gln-105. Substrate is bound by residues Tyr-123, Arg-127, and Ser-131. FMN is bound by residues 140 to 141 (QS) and Trp-185. 191 to 193 (RLH) provides a ligand contact to substrate. Position 195 (Arg-195) interacts with FMN.

The protein belongs to the pyridoxamine 5'-phosphate oxidase family. In terms of assembly, homodimer. FMN is required as a cofactor.

It catalyses the reaction pyridoxamine 5'-phosphate + O2 + H2O = pyridoxal 5'-phosphate + H2O2 + NH4(+). It carries out the reaction pyridoxine 5'-phosphate + O2 = pyridoxal 5'-phosphate + H2O2. It participates in cofactor metabolism; pyridoxal 5'-phosphate salvage; pyridoxal 5'-phosphate from pyridoxamine 5'-phosphate: step 1/1. It functions in the pathway cofactor metabolism; pyridoxal 5'-phosphate salvage; pyridoxal 5'-phosphate from pyridoxine 5'-phosphate: step 1/1. Its function is as follows. Catalyzes the oxidation of either pyridoxine 5'-phosphate (PNP) or pyridoxamine 5'-phosphate (PMP) into pyridoxal 5'-phosphate (PLP). The chain is Pyridoxine/pyridoxamine 5'-phosphate oxidase from Shewanella sp. (strain ANA-3).